Consider the following 125-residue polypeptide: Small ribosomal subunit protein bS6 (125 aa).

Belongs to the bacterial ribosomal protein bS6 family.

Binds together with bS18 to 16S ribosomal RNA. The chain is Small ribosomal subunit protein bS6 from Campylobacter jejuni (strain RM1221).